Reading from the N-terminus, the 211-residue chain is Agamous-like MADS-box protein AGL12 (211 aa).

Positions arginine 3–leucine 57 constitute an MADS-box domain. One can recognise a K-box domain in the interval asparagine 95–serine 185.

In terms of tissue distribution, preferentially expressed in roots. In root meristem, expressed in external cells of columella, lateral root cap and atrichoblasts. In mature root, expressed in the central cylinder. Expressed in leaf vasculature, young floral meristems and nectaries.

The protein resides in the nucleus. Probable transcription activator that regulates root development by controlling cell proliferation in root meristem. May mediate responses to auxin in the root. May act as promoter of the flowering transition through up-regulation of SOC, FT and LFY. In Arabidopsis thaliana (Mouse-ear cress), this protein is Agamous-like MADS-box protein AGL12.